Consider the following 274-residue polypeptide: Thiamine kinase (274 aa).

It belongs to the thiamine kinase family.

It catalyses the reaction thiamine + ATP = thiamine phosphate + ADP + H(+). It functions in the pathway cofactor biosynthesis; thiamine diphosphate biosynthesis; thiamine phosphate from thiamine: step 1/1. In terms of biological role, catalyzes the ATP-dependent phosphorylation of thiamine to thiamine phosphate. Is involved in thiamine salvage. This is Thiamine kinase from Escherichia coli O139:H28 (strain E24377A / ETEC).